The following is a 129-amino-acid chain: MKKHGVLNRDIARILASLGHTDQIVIADCGLPIPEDVECIDVSLKQGVPSFVEVLAEILADMEVEGLIAAEEVKEQNPAVHRALTGTNIPIHYLPHEQFKDTTCKAKAVIRTGEVTPYANVILRSGVIF.

His-20 serves as the catalytic Proton donor. Residues Asp-28, His-96, and 118 to 120 contribute to the substrate site; that span reads YAN.

This sequence belongs to the RbsD / FucU family. RbsD subfamily. Homodecamer.

The protein localises to the cytoplasm. It catalyses the reaction beta-D-ribopyranose = beta-D-ribofuranose. Its pathway is carbohydrate metabolism; D-ribose degradation; D-ribose 5-phosphate from beta-D-ribopyranose: step 1/2. In terms of biological role, catalyzes the interconversion of beta-pyran and beta-furan forms of D-ribose. This is D-ribose pyranase from Halalkalibacterium halodurans (strain ATCC BAA-125 / DSM 18197 / FERM 7344 / JCM 9153 / C-125) (Bacillus halodurans).